The sequence spans 382 residues: Flap endonuclease 1 (382 aa).

The tract at residues 1–105 (MGIKGLNAII…HELTKRSSRR (105 aa)) is N-domain. Mg(2+) is bound at residue D34. DNA contacts are provided by R47 and R71. Residues D87, E156, E158, D177, and D179 each contribute to the Mg(2+) site. Residues 120 to 251 (EKMKQERRLV…VTALKLIKTH (132 aa)) form an I-domain region. E156 provides a ligand contact to DNA. Residues G229 and D231 each contribute to the DNA site. Residue D231 coordinates Mg(2+). The interval 339–347 (IQGRLDGFF) is interaction with PCNA. The interval 358–382 (AAAAKRAQENKKLNKNKNKVTKGRR) is disordered. The span at 370–382 (LNKNKNKVTKGRR) shows a compositional bias: basic residues.

It belongs to the XPG/RAD2 endonuclease family. FEN1 subfamily. In terms of assembly, interacts with PCNA. Three molecules of RAD27 bind to one PCNA trimer with each molecule binding to one PCNA monomer. PCNA stimulates the nuclease activity without altering cleavage specificity. Mg(2+) serves as cofactor. Post-translationally, phosphorylated. Phosphorylation upon DNA damage induces relocalization to the nuclear plasma.

Its subcellular location is the nucleus. The protein localises to the nucleolus. The protein resides in the nucleoplasm. It localises to the mitochondrion. Functionally, structure-specific nuclease with 5'-flap endonuclease and 5'-3' exonuclease activities involved in DNA replication and repair. During DNA replication, cleaves the 5'-overhanging flap structure that is generated by displacement synthesis when DNA polymerase encounters the 5'-end of a downstream Okazaki fragment. It enters the flap from the 5'-end and then tracks to cleave the flap base, leaving a nick for ligation. Also involved in the long patch base excision repair (LP-BER) pathway, by cleaving within the apurinic/apyrimidinic (AP) site-terminated flap. Acts as a genome stabilization factor that prevents flaps from equilibrating into structures that lead to duplications and deletions. Also possesses 5'-3' exonuclease activity on nicked or gapped double-stranded DNA, and exhibits RNase H activity. Also involved in replication and repair of rDNA and in repairing mitochondrial DNA. This chain is Flap endonuclease 1, found in Saccharomyces cerevisiae (strain RM11-1a) (Baker's yeast).